The chain runs to 316 residues: Ribosomal RNA small subunit methyltransferase H (316 aa).

S-adenosyl-L-methionine is bound by residues 35-37, Asp-55, Phe-84, Asp-105, and Gln-112; that span reads AGH.

This sequence belongs to the methyltransferase superfamily. RsmH family.

The protein localises to the cytoplasm. It carries out the reaction cytidine(1402) in 16S rRNA + S-adenosyl-L-methionine = N(4)-methylcytidine(1402) in 16S rRNA + S-adenosyl-L-homocysteine + H(+). Specifically methylates the N4 position of cytidine in position 1402 (C1402) of 16S rRNA. The polypeptide is Ribosomal RNA small subunit methyltransferase H (Streptococcus uberis (strain ATCC BAA-854 / 0140J)).